A 489-amino-acid polypeptide reads, in one-letter code: DNA-dependent metalloprotease SPRTN (489 aa).

M1 bears the N-acetylmethionine mark. The region spanning L45 to I212 is the SprT-like domain. H111 serves as a coordination point for Zn(2+). Residue E112 is part of the active site. Residues H115 and H130 each contribute to the Zn(2+) site. At K230 the chain carries N6-acetyllysine. The short motif at F253–G261 is the SHP-box element. S268 is modified (phosphoserine). K303 participates in a covalent cross-link: Glycyl lysine isopeptide (Lys-Gly) (interchain with G-Cter in SUMO2). The short motif at Q325–F332 is the PIP-box element. A Glycyl lysine isopeptide (Lys-Gly) (interchain with G-Cter in SUMO2); alternate cross-link involves residue K341. K341 is covalently cross-linked (Glycyl lysine isopeptide (Lys-Gly) (interchain with G-Cter in ubiquitin); alternate). The disordered stretch occupies residues G357–P409. A Glycyl lysine isopeptide (Lys-Gly) (interchain with G-Cter in SUMO2) cross-link involves residue K361. A compositionally biased stretch (low complexity) spans S363–S383. A phosphoserine; by CHEK1 mark is found at S373 and S374. Residue K376 forms a Glycyl lysine isopeptide (Lys-Gly) (interchain with G-Cter in SUMO2); alternate linkage. Residue K376 forms a Glycyl lysine isopeptide (Lys-Gly) (interchain with G-Cter in ubiquitin); alternate linkage. S383 is subject to Phosphoserine; by CHEK1. Over residues K384–T403 the composition is skewed to polar residues. Residues D402 to D413 carry the Nuclear localization signal motif. K414 participates in a covalent cross-link: Glycyl lysine isopeptide (Lys-Gly) (interchain with G-Cter in ubiquitin). Glycyl lysine isopeptide (Lys-Gly) (interchain with G-Cter in SUMO2) cross-links involve residues K423 and K424. The disordered stretch occupies residues K428 to M453. A Glycyl lysine isopeptide (Lys-Gly) (interchain with G-Cter in ubiquitin) cross-link involves residue K435. The span at S437–S451 shows a compositional bias: low complexity. The segment at M453–S480 adopts a UBZ4-type zinc-finger fold. 4 residues coordinate Zn(2+): C456, C459, H471, and C475. K484 is covalently cross-linked (Glycyl lysine isopeptide (Lys-Gly) (interchain with G-Cter in SUMO2)).

The protein belongs to the Spartan family. Homodimer. Interacts (VIA PIP-box) with PCNA (when ubiquitinated). Interacts (via its SHP-box) with VCP/p97. Interacts with RAD18. Interacts with KCTD13 and POLD3. Requires Zn(2+) as cofactor. Post-translationally, autocatalytically cleaved in response to double-stranded DNA-binding: autocatalytic cleavage takes place in trans and leads to inactivation. In terms of processing, monoubiquitinated; monoubiquitination promotes exclusion from chromatin. Deubiquitinated by VCPIP1: deubiquitination is required for subsequent acetylation and recruitment to chromatin and DNA damage sites. Acetylated following deubiquitination by VCPIP1, leading to recruitment to chromatin and DNA damage sites. Post-translationally, phosphorylation by CHEK1 promotes recruitment to chromatin.

The protein localises to the nucleus. The protein resides in the chromosome. With respect to regulation, DNA-binding activates the protease activity: single-stranded DNA-binding specifically activates ability to cleave covalent DNA-protein cross-links (DPCs). In contrast, double-stranded DNA-binding specifically activates autocatalytic cleavage, and subsequent inactivation. DNA-dependent metalloendopeptidase that mediates the proteolytic cleavage of covalent DNA-protein cross-links (DPCs) during DNA synthesis, thereby playing a key role in maintaining genomic integrity. DPCs are highly toxic DNA lesions that interfere with essential chromatin transactions, such as replication and transcription, and which are induced by reactive agents, such as UV light or formaldehyde. Associates with the DNA replication machinery and specifically removes DPCs during DNA synthesis. Catalyzes proteolytic cleavage of the HMCES DNA-protein cross-link following unfolding by the BRIP1/FANCJ helicase. Acts as a pleiotropic protease for DNA-binding proteins cross-linked with DNA, such as TOP1, TOP2A, histones H3 and H4. Mediates degradation of DPCs that are not ubiquitinated, while it is not able to degrade ubiquitinated DPCs. SPRTN activation requires polymerase collision with DPCs followed by helicase bypass of DPCs. Involved in recruitment of VCP/p97 to sites of DNA damage. Also acts as an activator of CHEK1 during normal DNA replication by mediating proteolytic cleavage of CHEK1, thereby promoting CHEK1 removal from chromatin and subsequent activation. Does not activate CHEK1 in response to DNA damage. May also act as a 'reader' of ubiquitinated PCNA: recruited to sites of UV damage and interacts with ubiquitinated PCNA and RAD18, the E3 ubiquitin ligase that monoubiquitinates PCNA. Facilitates chromatin association of RAD18 and is required for efficient PCNA monoubiquitination, promoting a feed-forward loop to enhance PCNA ubiquitination and translesion DNA synthesis. In Homo sapiens (Human), this protein is DNA-dependent metalloprotease SPRTN.